The chain runs to 244 residues: Uridylate kinase (244 aa).

ATP is bound at residue 15-18 (KLSG). Residues 23-28 (GSEGFG) form an involved in allosteric activation by GTP region. G57 is a binding site for UMP. Positions 58 and 62 each coordinate ATP. Residues D77 and 138 to 145 (TGNPFFTT) contribute to the UMP site. ATP-binding residues include T165, F171, and D174.

This sequence belongs to the UMP kinase family. As to quaternary structure, homohexamer.

It localises to the cytoplasm. It carries out the reaction UMP + ATP = UDP + ADP. The protein operates within pyrimidine metabolism; CTP biosynthesis via de novo pathway; UDP from UMP (UMPK route): step 1/1. With respect to regulation, allosterically activated by GTP. Inhibited by UTP. Functionally, catalyzes the reversible phosphorylation of UMP to UDP. In Aeromonas hydrophila subsp. hydrophila (strain ATCC 7966 / DSM 30187 / BCRC 13018 / CCUG 14551 / JCM 1027 / KCTC 2358 / NCIMB 9240 / NCTC 8049), this protein is Uridylate kinase.